Reading from the N-terminus, the 558-residue chain is Serine palmitoyltransferase 2 (558 aa).

Residues 33 to 42 (HDDDEEEEEV) show a composition bias toward acidic residues. The tract at residues 33-57 (HDDDEEEEEVKVDQGSEETTSSHDI) is disordered. Lys384 carries the post-translational modification N6-(pyridoxal phosphate)lysine.

This sequence belongs to the class-II pyridoxal-phosphate-dependent aminotransferase family. Heterodimer of sptl-1/sptl-2. Pyridoxal 5'-phosphate serves as cofactor.

It carries out the reaction L-serine + hexadecanoyl-CoA + H(+) = 3-oxosphinganine + CO2 + CoA. Its pathway is lipid metabolism; sphingolipid metabolism. Functionally, component of the serine palmitoyltransferase (SPT) that catalyzes the first committed step in sphingolipid biosynthesis, which is the condensation of an acyl-CoA species and L-serine. The catalytic core is composed of a heterodimer of sptl-1 and sptl-2 or sptl-1 and sptl-3. Required for the specification of abicobasal polarity and development of the gut lumen. This is Serine palmitoyltransferase 2 (sptl-2) from Caenorhabditis elegans.